The following is a 389-amino-acid chain: Coproporphyrin III ferrochelatase (389 aa).

The Fe-coproporphyrin III site is built by Ser70 and Tyr139. His205 is a binding site for Fe(2+). The interval 207-229 (IPSTDAGKSGPSGRPDSGEPWGE) is disordered. Glu303 lines the Fe(2+) pocket.

It belongs to the ferrochelatase family.

The protein resides in the cytoplasm. It carries out the reaction Fe-coproporphyrin III + 2 H(+) = coproporphyrin III + Fe(2+). It participates in porphyrin-containing compound metabolism; protoheme biosynthesis. Involved in coproporphyrin-dependent heme b biosynthesis. Catalyzes the insertion of ferrous iron into coproporphyrin III to form Fe-coproporphyrin III. This chain is Coproporphyrin III ferrochelatase, found in Leifsonia xyli subsp. xyli (strain CTCB07).